A 535-amino-acid polypeptide reads, in one-letter code: Zinc finger protein squeeze (535 aa).

Composition is skewed to low complexity over residues 70-97 and 131-142; these read MVME…HPPQ and SSASGSGSNGSS. Residues 70–157 form a disordered region; the sequence is MVMEQQPHPD…RRGDGDQAKP (88 aa). Over residues 145 to 156 the composition is skewed to basic and acidic residues; the sequence is EESRRGDGDQAK. 5 C2H2-type zinc fingers span residues 158–180, 186–208, 214–238, 244–266, and 275–297; these read YKCG…TRIH, YRCE…IRTH, YKCR…SRCH, FKCN…IPKH, and HICN…LQKH. Thr-395 bears the Phosphothreonine mark. Phosphoserine occurs at positions 399 and 401. Positions 417–475 are disordered; it reads TPQHHLQQQQQQQQQQQAQQQQQAQHQPSPGPGNSAFTPLSATVAPPPHLQQHRGPPGS. Positions 419–443 are enriched in low complexity; sequence QHHLQQQQQQQQQQQAQQQQQAQHQ. A Phosphoserine modification is found at Ser-475. Phosphotyrosine occurs at positions 479 and 481.

This sequence belongs to the krueppel C2H2-type zinc-finger protein family. Interacts with nab; which acts as a coactivator. Interacts with ap. Largely restricted to subsets of cells in the CNS throughout embryonic and first instar larval (L1) development. Expressed in a population of lateral interneurons, primarily projecting axons in the anterior and posterior commissures. Overlaps with ap within the thoracic ap cluster. By stage 17, it is restricted to 2 neurons within the ap-cluster, with one neuron typically continuing to display higher levels of expression. Selectively expressed at higher levels within the FMRFa Tv neurons. Expressed in all leucokinergic cells.

It is found in the nucleus. Transcription factor involved in neuronal fate specification. First required in embryonic CNS development to define the number of cells that express apterous (ap) in the ap thoracic cluster of interneurons. Later on, it plays a central role in the combinatorial code of transcription factors that specifies the fate of the Tv neuron in the ap cluster by participating in the transcription regulation of FMRFa in Tv cells. Also required for projection neuron dendritic targeting. This Drosophila melanogaster (Fruit fly) protein is Zinc finger protein squeeze (sqz).